The following is a 275-amino-acid chain: MKLYANNKCLDLSVPQIMGILNFTPDSFSDSGQFFSLDKALFQVEKMLEEGATIIDIGGESTRPNADEVSEQEELHRVVPVVEAVRNRFDCWISVDSSKAVVMREAANVGMDLINDIRALQEPNALETAVKLALPVCIMHMQGQPRTMQANPYYENVVQDVLAFLQKRTNECLSAGIKKENLIWDMGFGFGKSVQHNYQLLQNLNEFCQIGYPVLAGLSRKSMIGAVLDKPVDQRIIGSAAGALIAVQKGAKILRVHDVAATSDMLKVWQATANA.

A Pterin-binding domain is found at 15–267 (PQIMGILNFT…DVAATSDMLK (253 aa)). Asn-22 serves as a coordination point for Mg(2+). (7,8-dihydropterin-6-yl)methyl diphosphate-binding positions include Thr-62, Asp-96, Asn-115, Asp-185, Lys-221, and 255–257 (RVH).

The protein belongs to the DHPS family. Homodimer. The cofactor is Mg(2+).

It catalyses the reaction (7,8-dihydropterin-6-yl)methyl diphosphate + 4-aminobenzoate = 7,8-dihydropteroate + diphosphate. The protein operates within cofactor biosynthesis; tetrahydrofolate biosynthesis; 7,8-dihydrofolate from 2-amino-4-hydroxy-6-hydroxymethyl-7,8-dihydropteridine diphosphate and 4-aminobenzoate: step 1/2. Functionally, catalyzes the condensation of para-aminobenzoate (pABA) with 6-hydroxymethyl-7,8-dihydropterin diphosphate (DHPt-PP) to form 7,8-dihydropteroate (H2Pte), the immediate precursor of folate derivatives. The polypeptide is Dihydropteroate synthase (folP-A) (Haemophilus influenzae (strain ATCC 51907 / DSM 11121 / KW20 / Rd)).